We begin with the raw amino-acid sequence, 857 residues long: Blue light receptor lreA (857 aa).

3 consecutive PAS domains span residues 306–328 (IIYV…VGQN), 479–542 (LVEN…TTTD), and 608–642 (LSKS…DLMD). A GATA-type zinc finger spans residues 811–836 (CAICQTKKTPEWRRGPSGERDLCNSC).

Transcription factor that acts as a blue light sensor. Plays crucial roles in fungal growth and asexual development. Involved in conidiophore formation, sclerotium production, and conidial stress tolerance. Promotes conidiation by inducing the expression of brlA and abaA. Positively regulates the fungal pathogenicity towards maize. In blue light conditions, inhibits aflatoxin B1 (AFB1) biosynthesis by down-regulating the expression of key genes such as aflA, aflJ, aflH, aflO and aflK. The polypeptide is Blue light receptor lreA (Aspergillus flavus).